A 79-amino-acid chain; its full sequence is Acyl carrier protein (79 aa).

Residues 2–77 (SEIGERVKKI…DATKFLEKNA (76 aa)) enclose the Carrier domain. S37 is subject to O-(pantetheine 4'-phosphoryl)serine.

The protein belongs to the acyl carrier protein (ACP) family. Post-translationally, 4'-phosphopantetheine is transferred from CoA to a specific serine of apo-ACP by AcpS. This modification is essential for activity because fatty acids are bound in thioester linkage to the sulfhydryl of the prosthetic group.

The protein localises to the cytoplasm. The protein operates within lipid metabolism; fatty acid biosynthesis. Carrier of the growing fatty acid chain in fatty acid biosynthesis. This Nitrobacter hamburgensis (strain DSM 10229 / NCIMB 13809 / X14) protein is Acyl carrier protein.